The following is a 248-amino-acid chain: DNA repair protein RecO (248 aa).

Belongs to the RecO family.

Involved in DNA repair and RecF pathway recombination. The chain is DNA repair protein RecO from Bartonella tribocorum (strain CIP 105476 / IBS 506).